Reading from the N-terminus, the 177-residue chain is Putative membrane protein 165 (177 aa).

Residues M1–I7 lie on the Intravirion side of the membrane. Residues A8–G24 form a helical membrane-spanning segment. Topologically, residues L25 to N166 are virion surface.

This sequence belongs to the asfivirus envelope protein p22 family.

It is found in the virion membrane. It localises to the host cell membrane. The protein is Putative membrane protein 165 of African swine fever virus (isolate Pig/Kenya/KEN-50/1950) (ASFV).